The following is a 140-amino-acid chain: Ribosome maturation factor RimP (140 aa).

It belongs to the RimP family.

The protein localises to the cytoplasm. Functionally, required for maturation of 30S ribosomal subunits. The protein is Ribosome maturation factor RimP of Campylobacter jejuni subsp. doylei (strain ATCC BAA-1458 / RM4099 / 269.97).